Here is an 848-residue protein sequence, read N- to C-terminus: Aryl hydrocarbon receptor (848 aa).

Residues 1–9 (MSSGANITY) constitute a propeptide that is removed on maturation. The segment at 1 to 38 (MSSGANITYASRKRRKPVQKTVKPIPAEGIKSNPSKRH) is disordered. 2 consecutive short sequence motifs (nuclear localization signal) follow at residues 12-15 (RKRR) and 36-41 (KRHRDR). Positions 26–79 (PAEGIKSNPSKRHRDRLNTELDRLASLLPFPQDVINKLDKLSVLRLSVSYLRAK) constitute a bHLH domain. The DNA-binding stretch occupies residues 37–65 (RHRDRLNTELDRLASLLPFPQDVINKLDK). Required for maintaining the overall integrity of the AHR:ARNT heterodimer and its transcriptional activity regions lie at residues 49-81 (LASL…AKSF), 116-124 (LLQALNGFV), and 260-262 (FAI). Residues 63–71 (LDKLSVLRL) carry the Nuclear export signal motif. One can recognise a PAS 1 domain in the interval 111–175 (QEGEFLLQAL…AEFQRQLHWA (65 aa)). The 71-residue stretch at 266-336 (LQPPSILEIR…CAESHIRMIK (71 aa)) folds into the PAS 2 domain. In terms of domain architecture, PAC spans 342–383 (MTVFRLLAKHSRWRWVQSNARLIYRNGRPDYIIVTQRPLTDE). Residues 421 to 449 (LPIRTKSNTSRKDWAPQSTPSKDSFHPSS) are disordered. Residues 436–449 (PQSTPSKDSFHPSS) show a composition bias toward polar residues.

In terms of assembly, homodimer. Heterodimer; efficient DNA binding requires dimerization with another bHLH protein. Interacts with ARNT; the heterodimer ARNT:AHR binds to core DNA sequence 5'-TGCGTG-3' within the dioxin response element (DRE) of target gene promoters and activates their transcription. Binds MYBBP1A. Interacts with coactivators including SRC-1, RIP140 and NOCA7, and with the corepressor SMRT. Interacts with NEDD8 and IVNS1ABP. Interacts with BMAL1. Interacts with HSP90AB1. Interacts with TIPARP; leading to mono-ADP-ribosylation of AHR and subsequent inhibition of AHR. Post-translationally, mono-ADP-ribosylated, leading to inhibit transcription activator activity of AHR.

Its subcellular location is the cytoplasm. It is found in the nucleus. In terms of biological role, ligand-activated transcription factor that enables cells to adapt to changing conditions by sensing compounds from the environment, diet, microbiome and cellular metabolism, and which plays important roles in development, immunity and cancer. Upon ligand binding, translocates into the nucleus, where it heterodimerizes with ARNT and induces transcription by binding to xenobiotic response elements (XRE). Regulates a variety of biological processes, including angiogenesis, hematopoiesis, drug and lipid metabolism, cell motility and immune modulation. Xenobiotics can act as ligands: upon xenobiotic-binding, activates the expression of multiple phase I and II xenobiotic chemical metabolizing enzyme genes (such as the CYP1A1 gene). Mediates biochemical and toxic effects of halogenated aromatic hydrocarbons. Next to xenobiotics, natural ligands derived from plants, microbiota, and endogenous metabolism are potent AHR agonists. Tryptophan (Trp) derivatives constitute an important class of endogenous AHR ligands. Acts as a negative regulator of anti-tumor immunity: indoles and kynurenic acid generated by Trp catabolism act as ligand and activate AHR, thereby promoting AHR-driven cancer cell motility and suppressing adaptive immunity. Regulates the circadian clock by inhibiting the basal and circadian expression of the core circadian component PER1. Inhibits PER1 by repressing the CLOCK-BMAL1 heterodimer mediated transcriptional activation of PER1. The heterodimer ARNT:AHR binds to core DNA sequence 5'-TGCGTG-3' within the dioxin response element (DRE) of target gene promoters and activates their transcription. The sequence is that of Aryl hydrocarbon receptor (Ahr) from Mus musculus castaneus (Southeastern Asian house mouse).